A 366-amino-acid chain; its full sequence is Tetraacyldisaccharide 4'-kinase (366 aa).

Position 51–58 (51–58 (TVGGTGKT)) interacts with ATP.

The protein belongs to the LpxK family.

It carries out the reaction a lipid A disaccharide + ATP = a lipid IVA + ADP + H(+). The protein operates within glycolipid biosynthesis; lipid IV(A) biosynthesis; lipid IV(A) from (3R)-3-hydroxytetradecanoyl-[acyl-carrier-protein] and UDP-N-acetyl-alpha-D-glucosamine: step 6/6. Transfers the gamma-phosphate of ATP to the 4'-position of a tetraacyldisaccharide 1-phosphate intermediate (termed DS-1-P) to form tetraacyldisaccharide 1,4'-bis-phosphate (lipid IVA). The polypeptide is Tetraacyldisaccharide 4'-kinase (Phocaeicola vulgatus (strain ATCC 8482 / DSM 1447 / JCM 5826 / CCUG 4940 / NBRC 14291 / NCTC 11154) (Bacteroides vulgatus)).